The following is a 780-amino-acid chain: Exocyst complex component 3-like protein (780 aa).

This sequence belongs to the SEC6 family.

It is found in the cytoplasmic vesicle. Its subcellular location is the secretory vesicle. Its function is as follows. As part of the exocyst, may play a role in regulated exocytosis. This Danio rerio (Zebrafish) protein is Exocyst complex component 3-like protein (exoc3l1).